The chain runs to 611 residues: Chaperone protein DnaK (611 aa).

Thr-173 is subject to Phosphothreonine; by autocatalysis. The span at 579–592 (AAGQAEGAQGAQDA) shows a compositional bias: low complexity. The interval 579–598 (AAGQAEGAQGAQDAGAKKDN) is disordered.

Belongs to the heat shock protein 70 family.

In terms of biological role, acts as a chaperone. This Bacillus cereus (strain B4264) protein is Chaperone protein DnaK.